Consider the following 596-residue polypeptide: Proteasome-associated ATPase (596 aa).

The stretch at 12–94 (SRWERETQDL…KEEIDRLAQP (83 aa)) forms a coiled coil. 280–285 (GCGKTL) is an ATP binding site. The tract at residues 595–596 (YL) is docks into pockets in the proteasome alpha-ring.

This sequence belongs to the AAA ATPase family. Homohexamer. Assembles into a hexameric ring structure that caps the 20S proteasome core. Strongly interacts with the prokaryotic ubiquitin-like protein Pup through a hydrophobic interface; the interacting region of ARC lies in its N-terminal coiled-coil domain. There is one Pup binding site per ARC hexamer ring. Upon ATP-binding, the C-terminus of ARC interacts with the alpha-rings of the proteasome core, possibly by binding to the intersubunit pockets.

It functions in the pathway protein degradation; proteasomal Pup-dependent pathway. Functionally, ATPase which is responsible for recognizing, binding, unfolding and translocation of pupylated proteins into the bacterial 20S proteasome core particle. May be essential for opening the gate of the 20S proteasome via an interaction with its C-terminus, thereby allowing substrate entry and access to the site of proteolysis. Thus, the C-termini of the proteasomal ATPase may function like a 'key in a lock' to induce gate opening and therefore regulate proteolysis. The chain is Proteasome-associated ATPase from Stackebrandtia nassauensis (strain DSM 44728 / CIP 108903 / NRRL B-16338 / NBRC 102104 / LLR-40K-21).